A 42-amino-acid chain; its full sequence is Pelovaterin (42 aa).

3 disulfide bridges follow: Cys8–Cys38, Cys16–Cys32, and Cys24–Cys39.

The protein resides in the secreted. The protein localises to the extracellular space. Its subcellular location is the extracellular matrix. In terms of biological role, induces the nucleation and stabilization of vaterite, one of the crystalline polymorphs of calcium carbonate. Exhibits strong antimicrobial activity against Pseudomonas aeruginosa and Proteus vulgaris. This Pelodiscus sinensis (Chinese softshell turtle) protein is Pelovaterin.